A 536-amino-acid chain; its full sequence is Protein scd2/ral3 (536 aa).

In terms of domain architecture, SH3 1 spans 24 to 86 (PPRKVIRALY…PVSHFEEIGK (63 aa)). A disordered region spans residues 88-115 (VKSERDSDGSGQISFTDLTTNSSTTRSS). Positions 101-115 (SFTDLTTNSSTTRSS) are enriched in low complexity. Residues 123-185 (SQPLFGIVQF…PLSFIQLRDL (63 aa)) enclose the SH3 2 domain. The PX domain occupies 293–413 (SSEPTVVAAM…LFFLPLDGDV (121 aa)). The PB1 domain maps to 459–533 (TCKVKVRLGD…ESGVLLFAER (75 aa)).

As to quaternary structure, scd1, scd2, cdc42, and ras1, in its GTP-bound state, act cooperatively to form a protein complex.

Functionally, required for mating and morphogenesis. Interacts directly with scd1 and with cdc42. May bridge and facilitate scd1 and cdc42 interactions. The chain is Protein scd2/ral3 (scd2) from Schizosaccharomyces pombe (strain 972 / ATCC 24843) (Fission yeast).